Consider the following 458-residue polypeptide: Monomethylamine methyltransferase MtmB2 (458 aa).

Pyrrolysine 202 is a non-standard amino acid (pyrrolysine).

Belongs to the monomethylamine methyltransferase family. Can form a complex with MtmC.

The catalysed reaction is Co(I)-[methylamine-specific corrinoid protein] + methylamine + H(+) = methyl-Co(III)-[methylamine-specific corrinoid protein] + NH4(+). Its pathway is one-carbon metabolism; methanogenesis from methylamine. Functionally, catalyzes the transfer of the methyl group from monomethylamine to the corrinoid cofactor of MtmC. The polypeptide is Monomethylamine methyltransferase MtmB2 (mtmB2) (Methanosarcina acetivorans (strain ATCC 35395 / DSM 2834 / JCM 12185 / C2A)).